Consider the following 293-residue polypeptide: 4-hydroxy-tetrahydrodipicolinate synthase (293 aa).

Threonine 45 serves as a coordination point for pyruvate. The Proton donor/acceptor role is filled by tyrosine 133. The active-site Schiff-base intermediate with substrate is lysine 161. Valine 203 provides a ligand contact to pyruvate.

It belongs to the DapA family. As to quaternary structure, homotetramer; dimer of dimers.

It localises to the cytoplasm. The catalysed reaction is L-aspartate 4-semialdehyde + pyruvate = (2S,4S)-4-hydroxy-2,3,4,5-tetrahydrodipicolinate + H2O + H(+). The protein operates within amino-acid biosynthesis; L-lysine biosynthesis via DAP pathway; (S)-tetrahydrodipicolinate from L-aspartate: step 3/4. Catalyzes the condensation of (S)-aspartate-beta-semialdehyde [(S)-ASA] and pyruvate to 4-hydroxy-tetrahydrodipicolinate (HTPA). The chain is 4-hydroxy-tetrahydrodipicolinate synthase from Exiguobacterium sp. (strain ATCC BAA-1283 / AT1b).